Consider the following 521-residue polypeptide: Two-component response regulator ARR11 (521 aa).

The 116-residue stretch at 12–127 folds into the Response regulatory domain; it reads RVLVVDDDPT…ELKIIWQHVL (116 aa). Residue Asp63 is modified to 4-aspartylphosphate. The Nuclear localization signal signature appears at 192–195; sequence KKAR. Positions 195–246 form a DNA-binding region, myb-like GARP; the sequence is RVVWSFELHHKFVNAVNQIGCDHKAGPKKILDLMNVPWLTRENVASHLQKYR.

Belongs to the ARR family. Type-B subfamily. In terms of assembly, binds the target DNA as a monomer. Post-translationally, two-component system major event consists of a His-to-Asp phosphorelay between a sensor histidine kinase (HK) and a response regulator (RR). In plants, the His-to-Asp phosphorelay involves an additional intermediate named Histidine-containing phosphotransfer protein (HPt). This multistep phosphorelay consists of a His-Asp-His-Asp sequential transfer of a phosphate group between first a His and an Asp of the HK protein, followed by the transfer to a conserved His of the HPt protein and finally the transfer to an Asp in the receiver domain of the RR protein. Detected in the whole plant. Predominantly expressed in roots and stems.

The protein resides in the nucleus. Its function is as follows. Transcriptional activator that binds specifically to the DNA sequence 5'-[AG]GATT-3'. Functions as a response regulator involved in His-to-Asp phosphorelay signal transduction system. Phosphorylation of the Asp residue in the receiver domain activates the ability of the protein to promote the transcription of target genes. Could directly activate some type-A response regulators in response to cytokinins. The polypeptide is Two-component response regulator ARR11 (ARR11) (Arabidopsis thaliana (Mouse-ear cress)).